We begin with the raw amino-acid sequence, 190 residues long: Histone-arginine methyltransferase METTL23 (190 aa).

The protein belongs to the methyltransferase superfamily. METTL23 family. As to quaternary structure, interacts with HSPA5, HSP90B1, TUBULIN, UGGT1 and UGGT2. Interacts with TET3. Interacts with STPG4.

The protein localises to the nucleus. The protein resides in the cytoplasm. It catalyses the reaction L-arginyl-[protein] + 2 S-adenosyl-L-methionine = N(omega),N(omega)-dimethyl-L-arginyl-[protein] + 2 S-adenosyl-L-homocysteine + 2 H(+). Its function is as follows. Histone methyltransferase that dimethylates histone H3 at 'Arg-17', forming asymmetric dimethylarginine (H3R17me2a), leading to activate transcription via chromatin remodeling. Maternal factor involved in epigenetic chromatin reprogramming of the paternal genome in the zygote: mediates H3R17me2a, promoting histone H3.3 incorporation in the male pronucleus, leading to TET3 recruitment and subsequent DNA demethylation. This chain is Histone-arginine methyltransferase METTL23, found in Homo sapiens (Human).